We begin with the raw amino-acid sequence, 630 residues long: MSKIHELSPELTNQIAAGEVIERPASVVKELCENSLDAGSKRIRIDFIDAGLKQITVQDNGSGIAKDQIDLAFTRHATSKIATERDLFNISTLGFRGEALASIAAVSHVEVTTSNDNLGGVRAIFSGSEKKLQEDAASPKGTKITVSDLFFNTPARLKYLRSERTEILKIVDIVNRLALGHPDVSFTLTNNGKVLLKTNGRDDLRQDIANIYGRQLAEKMNILKGKSPDFEISGLISDPNTTRSNRNFISLLLNGRYIKNYRLTQAIMAGYGNKLRPRRYPIAVVKIELDPLLVDVNVHPTKQEVRLSKEQELERLLTTSISEALEQNNQIDSGLNNLLAPKKSTNIDQLKFNLNKDVVNTARPVEFTPQVEPDQNAEVHETGANFVSLDQVRNDDKYVITSTWNDNVNQQVQLSPFDEEKDMQGKDDSIISSGDEILANNLPELTYMGQTKSYLIAHHEEDLYLIDQVNAYRRLAYDQILQDLNSENISQQGLLSPLILDFSNVDYLKLKENLENLQEFGLFLEDFGQNSLILRTYPMWLQPDAEKNVRMILDLYLNQTEHDISKLKAQIAGEITMRQSARRRMLNPVEAQELLKELRNSSDPYQDFEGKIIIIQLSENDLNKMFKKDE.

Belongs to the DNA mismatch repair MutL/HexB family.

Functionally, this protein is involved in the repair of mismatches in DNA. It is required for dam-dependent methyl-directed DNA mismatch repair. May act as a 'molecular matchmaker', a protein that promotes the formation of a stable complex between two or more DNA-binding proteins in an ATP-dependent manner without itself being part of a final effector complex. This Lactobacillus johnsonii (strain CNCM I-12250 / La1 / NCC 533) protein is DNA mismatch repair protein MutL.